The primary structure comprises 490 residues: Ribulose bisphosphate carboxylase large chain (490 aa).

Substrate contacts are provided by Asn127 and Thr177. Lys179 functions as the Proton acceptor in the catalytic mechanism. A substrate-binding site is contributed by Lys181. Mg(2+) is bound by residues Lys205, Asp207, and Glu208. Lys205 carries the N6-carboxylysine modification. The active-site Proton acceptor is His297. Substrate-binding residues include Arg298, His330, and Ser382.

It belongs to the RuBisCO large chain family. Type I subfamily. Heterohexadecamer of 8 large chains and 8 small chains. Requires Mg(2+) as cofactor.

It is found in the plastid. Its subcellular location is the chloroplast. The enzyme catalyses 2 (2R)-3-phosphoglycerate + 2 H(+) = D-ribulose 1,5-bisphosphate + CO2 + H2O. It carries out the reaction D-ribulose 1,5-bisphosphate + O2 = 2-phosphoglycolate + (2R)-3-phosphoglycerate + 2 H(+). Functionally, ruBisCO catalyzes two reactions: the carboxylation of D-ribulose 1,5-bisphosphate, the primary event in carbon dioxide fixation, as well as the oxidative fragmentation of the pentose substrate in the photorespiration process. Both reactions occur simultaneously and in competition at the same active site. The polypeptide is Ribulose bisphosphate carboxylase large chain (Detonula confervacea (Marine diatom)).